Here is a 303-residue protein sequence, read N- to C-terminus: MYQRCFDNASETLFVAGKTPRLSRFAFSDDPKWESGHHVHDNETELIYVKKGVARFTIDSSLYVAHADDIVVIERGRLHAVASDVNDPATTCTCALYGFQFQGAEENQLLQPHSCPVIAAGQGKEVIKTLFNELSVILPQSKNSQTSSLWDAFAYTLAILYYENFKNAYRSEQGYIKKDVLIKDILFYLNNNYREKITLEQLSKKFRASVSYICHEFTKEYRISPINYVIQRRMTEAKWSLTNTELSQAEISWRVGYENVDHFAKLFLRHVGCSPSDYRRQFKNCFAEQEILSEFPQPVSLVG.

The HTH araC/xylS-type domain occupies 183 to 281; the sequence is KDILFYLNNN…GCSPSDYRRQ (99 aa). 2 DNA-binding regions (H-T-H motif) span residues 200–221 and 248–271; these read EQLS…TKEY and QAEI…LRHV.

This is an uncharacterized protein from Escherichia coli (strain K12).